We begin with the raw amino-acid sequence, 409 residues long: Magnesium-protoporphyrin IX monomethyl ester [oxidative] cyclase, chloroplastic (409 aa).

Disordered regions lie at residues 1 to 23 (MAAEMALVKPISKFSSPKLSNPS) and 36 to 60 (RMSASSSPPPPTTATSKSKKGTKKE). Residues 1-36 (MAAEMALVKPISKFSSPKLSNPSKFLSGRRFSTVIR) constitute a chloroplast transit peptide. Positions 13–23 (KFSSPKLSNPS) are enriched in polar residues.

The protein belongs to the AcsF family. As to quaternary structure, part of the FLU-containing chloroplast membrane complex composed of FLU, CRD1, PORB, PORC, CHLP and HEMA1. Interacts with YCF54 in chloroplasts. Fe cation serves as cofactor.

Its subcellular location is the plastid. The protein localises to the chloroplast inner membrane. It localises to the chloroplast thylakoid membrane. The enzyme catalyses Mg-protoporphyrin IX 13-monomethyl ester + 3 NADPH + 3 O2 + 2 H(+) = 3,8-divinyl protochlorophyllide a + 3 NADP(+) + 5 H2O. It participates in porphyrin-containing compound metabolism; chlorophyll biosynthesis. Its function is as follows. Catalytic component of the MgProto monomethylester (MgProtoME) cyclase complex that catalyzes the formation of the isocyclic ring in chlorophyll biosynthesis. Mediates the cyclase reaction, which results in the formation of divinylprotochlorophyllide (Pchlide) characteristic of all chlorophylls from magnesium-protoporphyrin IX 13-monomethyl ester (MgPMME). The polypeptide is Magnesium-protoporphyrin IX monomethyl ester [oxidative] cyclase, chloroplastic (Arabidopsis thaliana (Mouse-ear cress)).